The primary structure comprises 434 residues: UDP-glucose 6-dehydrogenase (434 aa).

NAD(+) contacts are provided by residues 2–19 (NITFIGSGYVGLVSGIIM), Val11, Asp30, Lys35, Thr121, and Glu152. Substrate is bound by residues 148-152 (EFLRE), Lys204, Asn208, 249-253 (FLNAG), and Gly257. Cys260 (nucleophile) is an active-site residue. Lys263 is a binding site for NAD(+). Residue Lys321 coordinates substrate. Residue Arg328 coordinates NAD(+).

It belongs to the UDP-glucose/GDP-mannose dehydrogenase family.

It catalyses the reaction UDP-alpha-D-glucose + 2 NAD(+) + H2O = UDP-alpha-D-glucuronate + 2 NADH + 3 H(+). It functions in the pathway nucleotide-sugar biosynthesis; UDP-alpha-D-glucuronate biosynthesis; UDP-alpha-D-glucuronate from UDP-alpha-D-glucose: step 1/1. The protein is UDP-glucose 6-dehydrogenase (udg) of Rickettsia prowazekii (strain Madrid E).